Consider the following 599-residue polypeptide: Sulfite reductase [NADPH] flavoprotein alpha-component (599 aa).

One can recognise a Flavodoxin-like domain in the interval 64 to 202; that stretch reads VTLISASQTG…AASEWRACVV (139 aa). Residues 70 to 75, 117 to 120, and 153 to 162 each bind FMN; these read SQTGNA, STQG, and LGDTSYEFFC. Residues 234 to 448 enclose the FAD-binding FR-type domain; sequence DAPLTATLSV…IEHNDNFRLP (215 aa). FAD contacts are provided by residues threonine 322, alanine 356, 386–389, 404–406, tyrosine 410, and 419–422; these read RLYS, TVG, and GGAS. NADP(+)-binding positions include 519–520, 525–529, and aspartate 561; these read SR and KIYVQ. Position 599 (tyrosine 599) interacts with FAD.

The protein belongs to the NADPH-dependent sulphite reductase flavoprotein subunit CysJ family. In the N-terminal section; belongs to the flavodoxin family. This sequence in the C-terminal section; belongs to the flavoprotein pyridine nucleotide cytochrome reductase family. Alpha(8)-beta(8). The alpha component is a flavoprotein, the beta component is a hemoprotein. Requires FAD as cofactor. FMN serves as cofactor.

It carries out the reaction hydrogen sulfide + 3 NADP(+) + 3 H2O = sulfite + 3 NADPH + 4 H(+). Its pathway is sulfur metabolism; hydrogen sulfide biosynthesis; hydrogen sulfide from sulfite (NADPH route): step 1/1. Functionally, component of the sulfite reductase complex that catalyzes the 6-electron reduction of sulfite to sulfide. This is one of several activities required for the biosynthesis of L-cysteine from sulfate. The flavoprotein component catalyzes the electron flow from NADPH -&gt; FAD -&gt; FMN to the hemoprotein component. The protein is Sulfite reductase [NADPH] flavoprotein alpha-component of Salmonella typhi.